The following is a 273-amino-acid chain: 3-methyl-2-oxobutanoate hydroxymethyltransferase (273 aa).

2 residues coordinate Mg(2+): aspartate 49 and aspartate 88. 3-methyl-2-oxobutanoate-binding positions include 49 to 50, aspartate 88, and lysine 118; that span reads DS. Position 120 (glutamate 120) interacts with Mg(2+). Glutamate 187 (proton acceptor) is an active-site residue.

It belongs to the PanB family. Homodecamer; pentamer of dimers. The cofactor is Mg(2+).

It is found in the cytoplasm. It carries out the reaction 3-methyl-2-oxobutanoate + (6R)-5,10-methylene-5,6,7,8-tetrahydrofolate + H2O = 2-dehydropantoate + (6S)-5,6,7,8-tetrahydrofolate. It functions in the pathway cofactor biosynthesis; (R)-pantothenate biosynthesis; (R)-pantoate from 3-methyl-2-oxobutanoate: step 1/2. Its function is as follows. Catalyzes the reversible reaction in which hydroxymethyl group from 5,10-methylenetetrahydrofolate is transferred onto alpha-ketoisovalerate to form ketopantoate. The chain is 3-methyl-2-oxobutanoate hydroxymethyltransferase from Sinorhizobium fredii (strain NBRC 101917 / NGR234).